A 172-amino-acid chain; its full sequence is Scytalone dehydratase (172 aa).

Positions 30, 50, and 53 each coordinate substrate. Residues histidine 85 and histidine 110 contribute to the active site. Substrate is bound at residue asparagine 131.

Belongs to the scytalone dehydratase family. Homotrimer. Each subunit contains an active site, located in the central part of the hydrophobic core of the monomer, which functions independently.

The protein resides in the endosome. It carries out the reaction scytalone = 1,3,8-trihydroxynaphthalene + H2O. It functions in the pathway pigment biosynthesis; melanin biosynthesis. With respect to regulation, (N-phenoxypropyl)-carboxamides such as carpropamid and derivatives of norephedrine act as inhibitors of scytalone dehydratase activity. Its function is as follows. Scytalone dehydratase; part of the gene cluster that mediates the biosynthesis of dihydroxynaphthalene melanin, a bluish-green pigment and a structural component of the conidial wall. Within the pathway, catalyzes the dehydration of scytalone as well as of vermelone. Is also able to dehydrate the alternate substrate 2,3-dihydro-2,5-dihydroxy-4H-benzopyran-4-one (DDBO) to 5-hydroxy-4H-1-benzopyran-4-one (HBO). The protein is Scytalone dehydratase (SDH1) of Pyricularia oryzae (strain 70-15 / ATCC MYA-4617 / FGSC 8958) (Rice blast fungus).